The primary structure comprises 154 residues: 3-hydroxyacyl-[acyl-carrier-protein] dehydratase FabZ (154 aa).

The active site involves histidine 58.

It belongs to the thioester dehydratase family. FabZ subfamily.

It is found in the cytoplasm. It carries out the reaction a (3R)-hydroxyacyl-[ACP] = a (2E)-enoyl-[ACP] + H2O. Its function is as follows. Involved in unsaturated fatty acids biosynthesis. Catalyzes the dehydration of short chain beta-hydroxyacyl-ACPs and long chain saturated and unsaturated beta-hydroxyacyl-ACPs. This Protochlamydia amoebophila (strain UWE25) protein is 3-hydroxyacyl-[acyl-carrier-protein] dehydratase FabZ.